Consider the following 326-residue polypeptide: Probable iron chelatin transport system permease protein HP_0889 (326 aa).

Transmembrane regions (helical) follow at residues 7–27, 64–84, 91–111, 113–133, 142–162, 164–184, 187–207, 241–261, 275–295, and 301–321; these read IALA…ESLS, ILAL…QTIF, PFLL…IAVV, SNIA…VLAM, LSLV…AGAI, FFVI…SLSL, YKDC…LFLL, VASA…LVIP, LLLS…VVAK, and DLPV…WLLF.

This sequence belongs to the binding-protein-dependent transport system permease family. FecCD subfamily.

The protein resides in the cell inner membrane. Its function is as follows. Part of a binding-protein-dependent transport system for an iron chelatin; probably responsible for the translocation of the substrate across the membrane. The polypeptide is Probable iron chelatin transport system permease protein HP_0889 (Helicobacter pylori (strain ATCC 700392 / 26695) (Campylobacter pylori)).